The sequence spans 199 residues: Casparian strip membrane protein 1 (199 aa).

The Cytoplasmic segment spans residues 1–37 (MKSESAAIDIPESSSVAKGKAPLIAVSRNEKGGYRKG). A helical transmembrane segment spans residues 38-58 (IAIFDFILRLAAIATALAAAA). Topologically, residues 59-87 (AMGTSDETLPFFTQFFQFQASYDDLPTFQ) are extracellular. A helical transmembrane segment spans residues 88-108 (FFVIAIAIVGGYLVLSLPFSI). Residues 109–120 (VAIVRPHAVGPR) lie on the Cytoplasmic side of the membrane. Residues 121–141 (LLLIILDAVALTLNTAAGAAA) form a helical membrane-spanning segment. Over 142–173 (AAIVYLAHNGNSNTNWLAICQQYGDFCQKVSG) the chain is Extracellular. The chain crosses the membrane as a helical span at residues 174-194 (AVVASFITVVIFVFLIVLSAF). Topologically, residues 195–199 (ALRRH) are cytoplasmic.

This sequence belongs to the Casparian strip membrane proteins (CASP) family. Homodimer and heterodimers.

The protein localises to the cell membrane. Its function is as follows. Regulates membrane-cell wall junctions and localized cell wall deposition. Required for establishment of the Casparian strip membrane domain (CSD) and the subsequent formation of Casparian strips, a cell wall modification of the root endodermis that determines an apoplastic barrier between the intraorganismal apoplasm and the extraorganismal apoplasm and prevents lateral diffusion. In Populus trichocarpa (Western balsam poplar), this protein is Casparian strip membrane protein 1.